The following is a 193-amino-acid chain: MPNWGGGKKCGVCQKTVYFAEEVQCEGNSFHKSCFLCMVCKKNLDSTTVAVHGEEIYCKSCYGKKYGPKGYGYGQGAGTLSTDKGESLGIKHEEAPGHRPTTNPNASKFAQKIGGSERCPRCSQAVYAAEKVIGAGKSWHKACFRCAKCGKGLESTTLADKDGEIYCKGCYAKNFGPKGFGFGQGAGALVHSE.

One can recognise an LIM zinc-binding 1 domain in the interval 10–61 (CGVCQKTVYFAEEVQCEGNSFHKSCFLCMVCKKNLDSTTVAVHGEEIYCKSC). Residues 64–69 (KKYGPK) carry the Nuclear localization signal motif. Serine 81 carries the post-translational modification Phosphoserine. Residue lysine 84 is modified to N6-acetyllysine. A Glycyl lysine isopeptide (Lys-Gly) (interchain with G-Cter in SUMO2) cross-link involves residue lysine 91. 4 positions are modified to N6-acetyllysine: lysine 112, lysine 131, lysine 137, and lysine 161. One can recognise an LIM zinc-binding 2 domain in the interval 119 to 170 (CPRCSQAVYAAEKVIGAGKSWHKACFRCAKCGKGLESTTLADKDGEIYCKGC). The residue at position 192 (serine 192) is a Phosphoserine.

In terms of assembly, interacts with ASCC1; ASCC2 and TRIP4.

The protein resides in the nucleus. Functionally, could play a role in neuronal development. The chain is Cysteine and glycine-rich protein 1 (CSRP1) from Homo sapiens (Human).